The following is a 183-amino-acid chain: Small ribosomal subunit protein uS4c (183 aa).

Residues methionine 82–asparagine 143 form the S4 RNA-binding domain.

The protein belongs to the universal ribosomal protein uS4 family. Part of the 30S ribosomal subunit. Contacts protein S5. The interaction surface between S4 and S5 is involved in control of translational fidelity.

It is found in the plastid. Its subcellular location is the chloroplast. Functionally, one of the primary rRNA binding proteins, it binds directly to 16S rRNA where it nucleates assembly of the body of the 30S subunit. With S5 and S12 plays an important role in translational accuracy. In Babiana stricta (Baboon flower), this protein is Small ribosomal subunit protein uS4c (rps4).